We begin with the raw amino-acid sequence, 351 residues long: Protein EXPRESSION OF TERPENOIDS 1 (351 aa).

Positions Met-1–Ala-23 are disordered. Residues Gln-11 to Gln-22 are compositionally biased toward low complexity. Zn(2+) is bound by residues Cys-129, Cys-132, Cys-140, Cys-145, Cys-149, and Cys-156. The zn(2)-C6 fungal-type; degenerate DNA-binding region spans Cys-129–Cys-156. Residues Arg-170–Gly-219 are disordered. Over residues Gln-175–Asn-193 the composition is skewed to low complexity. The span at Ser-204 to Gly-219 shows a compositional bias: polar residues. Residues Ile-258–His-261 carry the Required for homo- and heterodimerization motif. The tract at residues Thr-286–Gly-320 is disordered. Positions Ala-303–Gly-320 are enriched in low complexity.

It belongs to the SHI protein family. Forms homodimers and heterodimers with LRP1.

The protein resides in the nucleus. Functionally, transcription activator involved in the transcriptional regulation of terpene biosynthesis in glandular trichomes. Binds to the promoter of the linalool synthase TPS5 and promotes TPS5 gene transactivation. Acts synergistically with MYC1 in the transactivation of TPS5. This is Protein EXPRESSION OF TERPENOIDS 1 from Solanum lycopersicum (Tomato).